The sequence spans 103 residues: Iron-sulfur cluster assembly protein CyaY (103 aa).

Belongs to the frataxin family.

Its function is as follows. Involved in iron-sulfur (Fe-S) cluster assembly. May act as a regulator of Fe-S biogenesis. In Rickettsia peacockii (strain Rustic), this protein is Iron-sulfur cluster assembly protein CyaY.